A 31-amino-acid chain; its full sequence is Phospholipase A2 homolog P-elapitoxin-Aa1a beta chain (31 aa).

The protein belongs to the phospholipase A2 family. Group I subfamily. In terms of assembly, heterotrimer of alpha, beta and gamma chains, each related to PLA2. In terms of tissue distribution, expressed by the venom gland.

Its subcellular location is the secreted. Functionally, heterotrimer: Snake venom phospholipase A2 (PLA2) that has presynaptic neurotoxicity. Inhibits nerve-evoked twitch contractions but not responses to cholinergic agonists acetylcholine and carbachol and to depolarizing agonist KCl. Causes a fade in tetanic contractions. Displays a triphasic mode of action with depression, enhancement and blockade of neurotransmission. Does not display myotoxic activity such as changes in baseline muscle tension or inhibition of directly stimulated muscle twitches. All subunits are necessary for maximum toxicity. In terms of biological role, monomer: The beta chain has no enzymatic activity and is not toxic by itself. In Acanthophis antarcticus (Common death adder), this protein is Phospholipase A2 homolog P-elapitoxin-Aa1a beta chain.